Here is a 215-residue protein sequence, read N- to C-terminus: Adenylate kinase (215 aa).

Residue 10 to 15 participates in ATP binding; that stretch reads GAGKGT. An NMP region spans residues 30 to 59; the sequence is STGDMLRAAIKAGTPLGLEAKKIIDEGGLV. Residues Thr-31, Arg-36, 57 to 59, 85 to 88, and Gln-92 each bind AMP; these read GLV and GFPR. The interval 122-159 is LID; it reads GRRVHLASGRTYHVTYNPPKVEGKDDVTGEDLIQRDDD. Residues Arg-123 and 132–133 each bind ATP; that span reads TY. Residues Arg-156 and Arg-167 each coordinate AMP. Gln-200 serves as a coordination point for ATP.

This sequence belongs to the adenylate kinase family. In terms of assembly, monomer.

The protein localises to the cytoplasm. The enzyme catalyses AMP + ATP = 2 ADP. Its pathway is purine metabolism; AMP biosynthesis via salvage pathway; AMP from ADP: step 1/1. Functionally, catalyzes the reversible transfer of the terminal phosphate group between ATP and AMP. Plays an important role in cellular energy homeostasis and in adenine nucleotide metabolism. This Neisseria meningitidis serogroup B (strain ATCC BAA-335 / MC58) protein is Adenylate kinase.